Reading from the N-terminus, the 267-residue chain is MRLIPLHNVDQVAKWSARYIVDRINQFQPTEARPFVLGLPTGGTPLKTYEALIELYKAGEVSFKHVVTFNMDEYVGLPKEHPESYHSFMYKNFFDHVDIQEKNINILNGNTEDHDAECQRYEEKIKSYGKIHLFMGGVGVDGHIAFNEPASSLSSRTRIKTLTEDTLIANSRFFDNDVNKVPKYALTIGVGTLLDAEEVMILVTGYNKAQALQAAVEGSINHLWTVTALQMHRRAIIVCDEPATQELKVKTVKYFTELEASAIRSVK.

The active-site Proton acceptor; for enolization step is aspartate 72. Aspartate 141 acts as the For ring-opening step in catalysis. Histidine 143 serves as the catalytic Proton acceptor; for ring-opening step. The active-site For ring-opening step is glutamate 148.

This sequence belongs to the glucosamine/galactosamine-6-phosphate isomerase family. NagB subfamily. As to quaternary structure, homohexamer.

The enzyme catalyses alpha-D-glucosamine 6-phosphate + H2O = beta-D-fructose 6-phosphate + NH4(+). It participates in amino-sugar metabolism; N-acetylneuraminate degradation; D-fructose 6-phosphate from N-acetylneuraminate: step 5/5. Allosterically activated by N-acetylglucosamine 6-phosphate (GlcNAc6P). Functionally, catalyzes the reversible isomerization-deamination of glucosamine 6-phosphate (GlcN6P) to form fructose 6-phosphate (Fru6P) and ammonium ion. The protein is Glucosamine-6-phosphate deaminase of Pasteurella multocida (strain Pm70).